We begin with the raw amino-acid sequence, 925 residues long: GPI ethanolamine phosphate transferase 1 (925 aa).

At methionine 1–arginine 6 the chain is on the cytoplasmic side. A helical transmembrane segment spans residues leucine 7–isoleucine 27. At tyrosine 28–serine 457 the chain is on the lumenal side. N-linked (GlcNAc...) asparagine glycosylation is found at asparagine 90, asparagine 138, asparagine 198, asparagine 286, asparagine 312, and asparagine 358. Residues isoleucine 458–phenylalanine 478 traverse the membrane as a helical segment. At isoleucine 479–asparagine 492 the chain is on the cytoplasmic side. A helical membrane pass occupies residues leucine 493 to glutamine 510. Over arginine 511–tyrosine 516 the chain is Lumenal. The chain crosses the membrane as a helical span at residues tyrosine 517 to leucine 537. Residues histidine 538–glycine 547 are Cytoplasmic-facing. Residues valine 548–valine 568 traverse the membrane as a helical segment. At tyrosine 569–arginine 574 the chain is on the lumenal side. The chain crosses the membrane as a helical span at residues tryptophan 575 to aspartate 595. The Cytoplasmic portion of the chain corresponds to alanine 596–asparagine 599. The chain crosses the membrane as a helical span at residues methionine 600–isoleucine 620. A topological domain (lumenal) is located at residue glutamate 621. A helical membrane pass occupies residues serine 622 to tryptophan 642. Residues arginine 643–lysine 653 are Cytoplasmic-facing. The chain crosses the membrane as a helical span at residues isoleucine 654–valine 674. Residues threonine 675–alanine 687 lie on the Lumenal side of the membrane. The chain crosses the membrane as a helical span at residues lysine 688–leucine 708. The Cytoplasmic portion of the chain corresponds to lysine 709 to leucine 719. The helical transmembrane segment at valine 720–phenylalanine 740 threads the bilayer. The Lumenal portion of the chain corresponds to tyrosine 741–arginine 775. The chain crosses the membrane as a helical span at residues isoleucine 776–serine 796. The Cytoplasmic portion of the chain corresponds to isoleucine 797 to glycine 818. A helical transmembrane segment spans residues alanine 819–methionine 839. At asparagine 840–tyrosine 848 the chain is on the lumenal side. A helical transmembrane segment spans residues threonine 849–leucine 869. Residues arginine 870–tyrosine 885 are Cytoplasmic-facing. Residues cysteine 886–leucine 906 form a helical membrane-spanning segment. The Lumenal portion of the chain corresponds to lysine 907 to histidine 925.

This sequence belongs to the PIGG/PIGN/PIGO family. PIGN subfamily.

The protein resides in the endoplasmic reticulum membrane. It participates in glycolipid biosynthesis; glycosylphosphatidylinositol-anchor biosynthesis. Its function is as follows. Ethanolamine phosphate transferase involved in glycosylphosphatidylinositol-anchor biosynthesis. Transfers ethanolamine phosphate to the first alpha-1,4-linked mannose of the glycosylphosphatidylinositol precursor of GPI-anchor. This is GPI ethanolamine phosphate transferase 1 (MCD4) from Eremothecium gossypii (strain ATCC 10895 / CBS 109.51 / FGSC 9923 / NRRL Y-1056) (Yeast).